The chain runs to 209 residues: ATP-dependent Clp protease proteolytic subunit 1 (209 aa).

The active-site Nucleophile is the serine 109. Histidine 134 is an active-site residue.

This sequence belongs to the peptidase S14 family. In terms of assembly, fourteen ClpP subunits assemble into 2 heptameric rings which stack back to back to give a disk-like structure with a central cavity, resembling the structure of eukaryotic proteasomes.

The protein resides in the cytoplasm. It catalyses the reaction Hydrolysis of proteins to small peptides in the presence of ATP and magnesium. alpha-casein is the usual test substrate. In the absence of ATP, only oligopeptides shorter than five residues are hydrolyzed (such as succinyl-Leu-Tyr-|-NHMec, and Leu-Tyr-Leu-|-Tyr-Trp, in which cleavage of the -Tyr-|-Leu- and -Tyr-|-Trp bonds also occurs).. Its function is as follows. Cleaves peptides in various proteins in a process that requires ATP hydrolysis. Has a chymotrypsin-like activity. Plays a major role in the degradation of misfolded proteins. The polypeptide is ATP-dependent Clp protease proteolytic subunit 1 (Corynebacterium diphtheriae (strain ATCC 700971 / NCTC 13129 / Biotype gravis)).